We begin with the raw amino-acid sequence, 273 residues long: MARCSNNLVGILNFLVFLLSIPILAGGIWLSQKGSTECERFLDKPVIALGVFLMVVAIAGLIGSCCRVTWLLWVYLFVMFLLILLVFCITVFAFVVTNKGAGEAIEGKGYKEYKLGDYSTWLQKRVENGKNWNKIRSCLVESKVCSKLEAKFVNVPVNSFYKEHLTALQSGCCKPSDECGFEYVNPTTWTKNTTGTHTNPDCQTWDNAKEKLCFDCQSCKAGLLDNVKSAWKKVAIVNIVFLVFLIIVYSVGCCAFRNNKRDDSYSRTYGYKP.

Topologically, residues 1 to 7 (MARCSNN) are cytoplasmic. The chain crosses the membrane as a helical span at residues 8 to 28 (LVGILNFLVFLLSIPILAGGI). The Extracellular segment spans residues 29–45 (WLSQKGSTECERFLDKP). Residues 46-66 (VIALGVFLMVVAIAGLIGSCC) traverse the membrane as a helical segment. At 67-75 (RVTWLLWVY) the chain is on the cytoplasmic side. Residues 76–96 (LFVMFLLILLVFCITVFAFVV) traverse the membrane as a helical segment. Residues 97 to 235 (TNKGAGEAIE…NVKSAWKKVA (139 aa)) lie on the Extracellular side of the membrane. Residue Asn192 is glycosylated (N-linked (GlcNAc...) asparagine). Residues 236-256 (IVNIVFLVFLIIVYSVGCCAF) form a helical membrane-spanning segment. Residues 257–273 (RNNKRDDSYSRTYGYKP) are Cytoplasmic-facing.

Belongs to the tetraspanin (TM4SF) family.

It localises to the membrane. May be involved in the regulation of cell differentiation. The protein is Tetraspanin-8 (TET8) of Arabidopsis thaliana (Mouse-ear cress).